Consider the following 180-residue polypeptide: Hypoxanthine-guanine phosphoribosyltransferase (180 aa).

Positions 43 and 44 each coordinate diphosphate. Glu-99 and Asp-100 together coordinate Mg(2+). Asp-103 functions as the Proton acceptor in the catalytic mechanism. GMP-binding positions include Lys-131, Phe-152–Val-153, and Asp-159. Arg-165 serves as a coordination point for diphosphate.

The protein belongs to the purine/pyrimidine phosphoribosyltransferase family. Mg(2+) is required as a cofactor.

The protein localises to the cytoplasm. The enzyme catalyses IMP + diphosphate = hypoxanthine + 5-phospho-alpha-D-ribose 1-diphosphate. The catalysed reaction is GMP + diphosphate = guanine + 5-phospho-alpha-D-ribose 1-diphosphate. It functions in the pathway purine metabolism; IMP biosynthesis via salvage pathway; IMP from hypoxanthine: step 1/1. Its pathway is purine metabolism; GMP biosynthesis via salvage pathway; GMP from guanine: step 1/1. Functionally, purine salvage pathway enzyme that catalyzes the transfer of the ribosyl-5-phosphate group from 5-phospho-alpha-D-ribose 1-diphosphate (PRPP) to the N9 position of the 6-oxopurines hypoxanthine and guanine to form the corresponding ribonucleotides IMP (inosine 5'-monophosphate) and GMP (guanosine 5'-monophosphate), with the release of PPi. In Streptococcus pneumoniae serotype 4 (strain ATCC BAA-334 / TIGR4), this protein is Hypoxanthine-guanine phosphoribosyltransferase (hpt).